Here is a 225-residue protein sequence, read N- to C-terminus: MAKGKSKNKFNQSWLHDHINDPYVKMAQREGYRARAAYKLKEIDEQDKLIQPGQVIVDLGAAPGSWSQYARNKLAASPRATGGKPDGAVVAIDILPMEPVADVTFIQGDFREEDVFRQLEEVVMAASGGAKIDLVLSDMAPNLSGVASADSARIEYLCDLALDFAQTHLKPDGALLVKCFHGSGYSQIVEKFKRQFKVVAPRKPKASRDKSSETFILGRYLKVVN.

Positions 64, 66, 93, 109, and 138 each coordinate S-adenosyl-L-methionine. Lys-178 serves as the catalytic Proton acceptor.

This sequence belongs to the class I-like SAM-binding methyltransferase superfamily. RNA methyltransferase RlmE family.

The protein localises to the cytoplasm. The catalysed reaction is uridine(2552) in 23S rRNA + S-adenosyl-L-methionine = 2'-O-methyluridine(2552) in 23S rRNA + S-adenosyl-L-homocysteine + H(+). Its function is as follows. Specifically methylates the uridine in position 2552 of 23S rRNA at the 2'-O position of the ribose in the fully assembled 50S ribosomal subunit. The protein is Ribosomal RNA large subunit methyltransferase E of Cupriavidus pinatubonensis (strain JMP 134 / LMG 1197) (Cupriavidus necator (strain JMP 134)).